Reading from the N-terminus, the 20-residue chain is Magnificalysin I (20 aa).

The tract at residues 1–10 (ALAGTIIAGA) is plays an important role in the hemolytic activity. The segment at 9-20 (GASLTFKILDEV) is N-terminal region.

This sequence belongs to the actinoporin family. Sea anemone subfamily. Octamer or nonamer in membranes. Monomer in the soluble state.

Its subcellular location is the secreted. It is found in the nematocyst. The protein localises to the target cell membrane. Its function is as follows. Pore-forming protein that forms cations-selective hydrophilic pores of around 1 nm and causes cytolysis. Pore formation is a multi-step process that involves specific recognition of membrane sphingomyelin (but neither cholesterol nor phosphatidylcholine) using aromatic rich region and adjacent phosphocholine (POC) binding site, firm binding to the membrane (mainly driven by hydrophobic interactions) accompanied by the transfer of the N-terminal region to the lipid-water interface and finally pore formation after oligomerization of monomers. In Heteractis magnifica (Magnificent sea anemone), this protein is Magnificalysin I.